The sequence spans 421 residues: Uracil permease (421 aa).

Transmembrane regions (helical) follow at residues Ile18–Leu38, Ile41–Cys61, Ile65–Thr85, Glu89–Val109, Gly115–Leu135, Pro160–Phe180, Ile186–Val206, Ile232–Val252, Val304–Gly324, Leu329–Ile349, Ile371–Phe391, and Met393–Ile413.

The protein belongs to the nucleobase:cation symporter-2 (NCS2) (TC 2.A.40) family.

The protein localises to the cell membrane. With respect to regulation, inhibited by the proton gradient disruptor carbonyl cyanide m-chlorophenylhydrazone (CCCP), but not by the sodium gradient disruptor ouabain. Both xanthine and uric acid act as competitive inhibitors of uracil transport. Functionally, specific for the uptake of uracil. Transport is probably proton-dependent. The polypeptide is Uracil permease (Paenibacillus larvae subsp. larvae (strain NRRL B-3650 / LMG 16245)).